Consider the following 157-residue polypeptide: Transcription elongation factor GreA (157 aa).

Residues 9–30 (LEGAQQLKEELKRRKTTDRKRI) adopt a coiled-coil conformation.

This sequence belongs to the GreA/GreB family.

Functionally, necessary for efficient RNA polymerase transcription elongation past template-encoded arresting sites. The arresting sites in DNA have the property of trapping a certain fraction of elongating RNA polymerases that pass through, resulting in locked ternary complexes. Cleavage of the nascent transcript by cleavage factors such as GreA or GreB allows the resumption of elongation from the new 3'terminus. GreA releases sequences of 2 to 3 nucleotides. In Magnetococcus marinus (strain ATCC BAA-1437 / JCM 17883 / MC-1), this protein is Transcription elongation factor GreA.